A 233-amino-acid chain; its full sequence is Zinc metalloproteinase recombinant fibrinogenase II (233 aa).

The 197-residue stretch at 19–215 (KYVETVFVVD…HNPECIDNEP (197 aa)) folds into the Peptidase M12B domain. Ca(2+) contacts are provided by Glu22 and Asp106. 3 cysteine pairs are disulfide-bonded: Cys130–Cys210, Cys170–Cys194, and Cys172–Cys177. Residue His155 coordinates Zn(2+). Glu156 is a catalytic residue. 2 residues coordinate Zn(2+): His159 and His165. Asn193 carries an N-linked (GlcNAc...) asparagine glycan. Ca(2+) is bound by residues Cys210, Asn213, Asn228, Leu230, and Glu232.

It belongs to the venom metalloproteinase (M12B) family. P-III subfamily. Requires Zn(2+) as cofactor. As to expression, expressed by the venom gland.

Its subcellular location is the secreted. Inhibited by PMSF and EDTA. Slightly inhibited by Cu(2+) and Zn(2+). Not inhibited by aprotinin, SBTI, Ca(2+), Mg(2+), Na(+) and K(+). Functionally, snake venom zinc metalloprotease that acts at several levels. It has direct fibrino(geno)lytic activity (Aalpha chain of fibrinogen is cleaved quickly, Bbeta chain slowly, and gamma chain even more slowly) and degradation of TNF-alpha. These activities permit to protect against sepsis and disseminated intravascular coagulation. It inhibits ADP-induced platelet aggregation in human platelet-rich plasma (IC(50)=65.4 ug/ml). It decreases the activity of complement by degrading human C5, C6 and C9 in vitro, decreasing serum levels of C1q, C3 and C4 in rat, and inhibiting the MAC deposition on HUVECs membrane. This inhibition of complement protects against hyperacute rejection that is the main barrier in xenotransplantation. Has preference for Lys at the P1 position. Cleaves insulin B chain at '36-Val-|-Glu-37', '39-Leu-|-Tyr-40', and '48-Phe-|-Phe-49' bonds. Also cleaves fibronectin and type IV collagen. The sequence is that of Zinc metalloproteinase recombinant fibrinogenase II from Deinagkistrodon acutus (Hundred-pace snake).